The following is a 507-amino-acid chain: Solute carrier family 2, facilitated glucose transporter member 6 (507 aa).

The disordered stretch occupies residues 1–28; that stretch reads MQEPLLGAEGPDYDTFPEKPPPSPGDRA. At 1–37 the chain is on the cytoplasmic side; that stretch reads MQEPLLGAEGPDYDTFPEKPPPSPGDRARVGTLQNKR. Residues 5–6 carry the Dileucine internalization motif motif; the sequence is LL. Phosphoserine is present on Ser-23. Residues 38 to 58 traverse the membrane as a helical segment; the sequence is VFLATFAAVLGNFSFGYALVY. The Extracellular portion of the chain corresponds to 59–81; that stretch reads TSPVIPALERSLDPDLHLTKSQA. The helical transmembrane segment at 82-102 threads the bilayer; it reads SWFGSVFTLGAAAGGLSAMIL. The Cytoplasmic segment spans residues 103 to 111; it reads NDLLGRKLS. Residues 112 to 132 traverse the membrane as a helical segment; sequence IMFSAVPSAAGYALMAGAHGL. Topologically, residues 133–140 are extracellular; sequence WMLLLGRT. Residues 141 to 161 traverse the membrane as a helical segment; the sequence is LTGFAGGLTAACIPVYVSEIA. Residues 162 to 168 are Cytoplasmic-facing; that stretch reads PPGVRGA. A helical membrane pass occupies residues 169-189; that stretch reads LGATPQLMAVFGSLSLYALGL. Gln-174 is an a D-hexose binding site. The Extracellular segment spans residues 190–194; it reads LLPWR. The chain crosses the membrane as a helical span at residues 195–215; the sequence is WLAVAGEAPVLIMILLLSFMP. Residues 216 to 289 are Cytoplasmic-facing; it reads NSPRFLLSRG…LLMRLLQQLT (74 aa). 286–287 lines the a D-hexose pocket; sequence QQ. A helical membrane pass occupies residues 290–310; the sequence is GITPILVYLQSIFDSTAVLLP. Residues 311–314 lie on the Extracellular side of the membrane; it reads PKDD. The chain crosses the membrane as a helical span at residues 315-335; sequence AAIVGAVRLLSVLIAALTMDL. The Cytoplasmic segment spans residues 336–339; it reads AGRK. The helical transmembrane segment at 340-360 threads the bilayer; that stretch reads VLLFVSAAIMFAANLTLGLYI. At 361–395 the chain is on the extracellular side; sequence HFGPRPLSPNSTAGLESESWGDLAQPLAAPAGYLT. Asn-370 carries an N-linked (GlcNAc...) asparagine glycan. The helical transmembrane segment at 396 to 416 threads the bilayer; the sequence is LVPLLATMLFIMGYAVGWGPI. Over 417–435 the chain is Cytoplasmic; it reads TWLLMSEVLPLRARGVASG. Trp-418 contacts a D-hexose. A helical membrane pass occupies residues 436-456; that stretch reads LCVLASWLTAFVLTKSFLPVV. Over 457-462 the chain is Extracellular; it reads STFGLQ. A helical transmembrane segment spans residues 463-483; that stretch reads VPFFFFAAICLVSLVFTGCCV. Residues 484-507 lie on the Cytoplasmic side of the membrane; that stretch reads PETKGRSLEQIESFFRTGRRSFLR.

It belongs to the major facilitator superfamily. Sugar transporter (TC 2.A.1.1) family. Glucose transporter subfamily. As to expression, highly expressed in brain, spleen and peripheral blood leukocytes.

It is found in the lysosome membrane. Functionally, probable sugar transporter that acts as a regulator of glycolysis in macrophages. Does not transport glucose. The polypeptide is Solute carrier family 2, facilitated glucose transporter member 6 (Homo sapiens (Human)).